The following is a 344-amino-acid chain: L-rhamnose-proton symporter (344 aa).

Helical transmembrane passes span 4–24, 38–58, 68–88, 101–121, 137–157, 175–195, 214–234, 259–279, 290–310, and 321–341; these read AITMGIFWHLIGAASAACFYA, WSVGGIVSWLILPWAISALLL, FNLSTLLPVFLFGAMWGIGNI, MGIGIAIGITLIVGTLMTPII, TLLGVFVALIGVGIVTRAGQL, LLLAVMCGIFSAGMSFAMNAA, LPSYVVIMGGGALVNLGFCFI, ILLSALGGLMWYLQFFFYAWG, MSWMLHMSFYVLCGGLVGLVL, and VAVLSLGCVVIIIAANIVGLG.

The protein belongs to the L-rhamnose transporter (TC 2.A.7.6) family.

The protein localises to the cell inner membrane. It carries out the reaction L-rhamnopyranose(in) + H(+)(in) = L-rhamnopyranose(out) + H(+)(out). In terms of biological role, uptake of L-rhamnose across the cytoplasmic membrane with the concomitant transport of protons into the cell (symport system). The polypeptide is L-rhamnose-proton symporter (Salmonella dublin (strain CT_02021853)).